A 277-amino-acid chain; its full sequence is Probable cyclic nucleotide phosphodiesterase MCR_0369 (277 aa).

Fe cation contacts are provided by Asp-17, His-19, Asp-53, Asn-83, His-165, His-204, and His-206. Residues His-19, Asp-53, and Asn-83–His-84 each bind AMP. Residue His-206 participates in AMP binding.

Belongs to the cyclic nucleotide phosphodiesterase class-III family. It depends on Fe(2+) as a cofactor.

The polypeptide is Probable cyclic nucleotide phosphodiesterase MCR_0369 (Moraxella catarrhalis (strain BBH18)).